The primary structure comprises 206 residues: Small ribosomal subunit protein uS4 (206 aa).

The region spanning 96–156 (GRLDNVVYRM…EKAKQQARIK (61 aa)) is the S4 RNA-binding domain.

The protein belongs to the universal ribosomal protein uS4 family. As to quaternary structure, part of the 30S ribosomal subunit. Contacts protein S5. The interaction surface between S4 and S5 is involved in control of translational fidelity.

In terms of biological role, one of the primary rRNA binding proteins, it binds directly to 16S rRNA where it nucleates assembly of the body of the 30S subunit. With S5 and S12 plays an important role in translational accuracy. The polypeptide is Small ribosomal subunit protein uS4 (Vibrio campbellii (strain ATCC BAA-1116)).